Here is a 101-residue protein sequence, read N- to C-terminus: uncharacterized protein (101 aa).

The chain crosses the membrane as a helical span at residues 72–94 (ILCPSFLNYSFINIYCFGPYTMV).

Its subcellular location is the membrane. This is an uncharacterized protein from Schizosaccharomyces pombe (strain 972 / ATCC 24843) (Fission yeast).